Consider the following 101-residue polypeptide: Small ribosomal subunit protein bS18c (101 aa).

This sequence belongs to the bacterial ribosomal protein bS18 family. Part of the 30S ribosomal subunit.

It localises to the plastid. The protein resides in the chloroplast. This chain is Small ribosomal subunit protein bS18c, found in Coffea arabica (Arabian coffee).